Consider the following 157-residue polypeptide: Transcriptional regulator MraZ (157 aa).

SpoVT-AbrB domains are found at residues 7–54 (TYEC…PMKE) and 83–126 (VRII…DKDL).

Belongs to the MraZ family. As to quaternary structure, forms oligomers.

The protein localises to the cytoplasm. Its subcellular location is the nucleoid. This chain is Transcriptional regulator MraZ, found in Flavobacterium psychrophilum (strain ATCC 49511 / DSM 21280 / CIP 103535 / JIP02/86).